Reading from the N-terminus, the 163-residue chain is Protein-export protein SecB (163 aa).

The protein belongs to the SecB family. As to quaternary structure, homotetramer, a dimer of dimers. One homotetramer interacts with 1 SecA dimer.

The protein localises to the cytoplasm. One of the proteins required for the normal export of preproteins out of the cell cytoplasm. It is a molecular chaperone that binds to a subset of precursor proteins, maintaining them in a translocation-competent state. It also specifically binds to its receptor SecA. The polypeptide is Protein-export protein SecB (Burkholderia cenocepacia (strain ATCC BAA-245 / DSM 16553 / LMG 16656 / NCTC 13227 / J2315 / CF5610) (Burkholderia cepacia (strain J2315))).